The sequence spans 133 residues: Basic leucine zipper transcriptional factor ATF-like 3 (133 aa).

A disordered region spans residues M1–S68. S2 and S24 each carry phosphoserine. The span at L11–S24 shows a compositional bias: polar residues. Positions D28–H91 constitute a bZIP domain. Residues R30–K55 are basic motif. Positions Q51–S68 are enriched in basic and acidic residues. Residues L56–L84 form a leucine-zipper region.

The protein belongs to the bZIP family. In terms of assembly, heterodimer; heterodimerizes with JUN family proteins. Interacts with JUN. As to expression, ubiquitously expressed.

The protein localises to the nucleus. AP-1 family transcription factor that controls the differentiation of CD8(+) thymic conventional dendritic cells in the immune system. Acts via the formation of a heterodimer with JUN family proteins that recognizes and binds DNA sequence 5'-TGA[CG]TCA-3' and regulates expression of target genes. Required for development of CD8-alpha(+) classical dendritic cells (cDCs) and related CD103(+) dendritic cells that cross-present antigens to CD8 T-cells and produce interleukin-12 (IL12) in response to pathogens. The chain is Basic leucine zipper transcriptional factor ATF-like 3 (Batf3) from Rattus norvegicus (Rat).